The following is an 84-amino-acid chain: ATP synthase subunit c (84 aa).

2 helical membrane-spanning segments follow: residues 9–29 (LGLA…GCGI) and 57–77 (ILGL…NLII).

The protein belongs to the ATPase C chain family. F-type ATPases have 2 components, F(1) - the catalytic core - and F(0) - the membrane proton channel. F(1) has five subunits: alpha(3), beta(3), gamma(1), delta(1), epsilon(1). F(0) has three main subunits: a(1), b(2) and c(10-14). The alpha and beta chains form an alternating ring which encloses part of the gamma chain. F(1) is attached to F(0) by a central stalk formed by the gamma and epsilon chains, while a peripheral stalk is formed by the delta and b chains.

The protein localises to the cell membrane. In terms of biological role, f(1)F(0) ATP synthase produces ATP from ADP in the presence of a proton or sodium gradient. F-type ATPases consist of two structural domains, F(1) containing the extramembraneous catalytic core and F(0) containing the membrane proton channel, linked together by a central stalk and a peripheral stalk. During catalysis, ATP synthesis in the catalytic domain of F(1) is coupled via a rotary mechanism of the central stalk subunits to proton translocation. Functionally, key component of the F(0) channel; it plays a direct role in translocation across the membrane. A homomeric c-ring of between 10-14 subunits forms the central stalk rotor element with the F(1) delta and epsilon subunits. This Lawsonia intracellularis (strain PHE/MN1-00) protein is ATP synthase subunit c.